A 323-amino-acid polypeptide reads, in one-letter code: Beta-ketoacyl-[acyl-carrier-protein] synthase III (323 aa).

Residues Cys-112 and His-249 contribute to the active site. Residues 250–254 (QANYR) form an ACP-binding region. Asn-279 is an active-site residue.

Belongs to the thiolase-like superfamily. FabH family. Homodimer.

Its subcellular location is the cytoplasm. The enzyme catalyses malonyl-[ACP] + acetyl-CoA + H(+) = 3-oxobutanoyl-[ACP] + CO2 + CoA. Its pathway is lipid metabolism; fatty acid biosynthesis. Functionally, catalyzes the condensation reaction of fatty acid synthesis by the addition to an acyl acceptor of two carbons from malonyl-ACP. Catalyzes the first condensation reaction which initiates fatty acid synthesis and may therefore play a role in governing the total rate of fatty acid production. Possesses both acetoacetyl-ACP synthase and acetyl transacylase activities. Its substrate specificity determines the biosynthesis of branched-chain and/or straight-chain of fatty acids. The protein is Beta-ketoacyl-[acyl-carrier-protein] synthase III of Clostridium kluyveri (strain NBRC 12016).